Reading from the N-terminus, the 536-residue chain is Cytochrome P450 78A7 (536 aa).

The helical transmembrane segment at 36–56 threads the bilayer; sequence LFLAVVFLSIVTWALAGGGGV. Cys481 contributes to the heme binding site.

This sequence belongs to the cytochrome P450 family. Requires heme as cofactor.

It localises to the membrane. In terms of biological role, functions probably in association with CYP78A5 in regulating relative growth of the shoot apical meristem and plant organs via a non-cell-autonomous signal. This chain is Cytochrome P450 78A7 (CYP78A7), found in Arabidopsis thaliana (Mouse-ear cress).